The sequence spans 404 residues: Cysteine desulfurase IscS (404 aa).

Residues Ala-75–Thr-76, Asn-155, Gln-183, and Ser-203–His-205 each bind pyridoxal 5'-phosphate. N6-(pyridoxal phosphate)lysine is present on Lys-206. Thr-243 contributes to the pyridoxal 5'-phosphate binding site. Catalysis depends on Cys-328, which acts as the Cysteine persulfide intermediate. Cys-328 lines the [2Fe-2S] cluster pocket.

This sequence belongs to the class-V pyridoxal-phosphate-dependent aminotransferase family. NifS/IscS subfamily. As to quaternary structure, homodimer. Forms a heterotetramer with IscU, interacts with other sulfur acceptors. Pyridoxal 5'-phosphate is required as a cofactor.

It is found in the cytoplasm. It catalyses the reaction (sulfur carrier)-H + L-cysteine = (sulfur carrier)-SH + L-alanine. Its pathway is cofactor biosynthesis; iron-sulfur cluster biosynthesis. Functionally, master enzyme that delivers sulfur to a number of partners involved in Fe-S cluster assembly, tRNA modification or cofactor biosynthesis. Catalyzes the removal of elemental sulfur atoms from cysteine to produce alanine. Functions as a sulfur delivery protein for Fe-S cluster synthesis onto IscU, an Fe-S scaffold assembly protein, as well as other S acceptor proteins. The chain is Cysteine desulfurase IscS from Haemophilus influenzae (strain PittGG).